Consider the following 412-residue polypeptide: Protein arginine N-methyltransferase 2 (412 aa).

Residues 48 to 65 (EKNRNGDKEFRESTDDNK) show a composition bias toward basic and acidic residues. 2 disordered regions span residues 48–69 (EKNR…TSNT) and 169–189 (SVQT…DDAT). 2 positions are modified to phosphoserine: serine 181 and serine 184. An RMT2 domain is found at 189–412 (TAANQQVYLK…YYYHPRITFA (224 aa)). Residues tyrosine 196, methionine 226, 250–255 (FGMGII), 271–273 (EAH), 298–299 (WQ), and aspartate 319 contribute to the S-adenosyl-L-methionine site.

This sequence belongs to the class I-like SAM-binding methyltransferase superfamily. RMT2 methyltransferase family. In terms of assembly, monomer. Interacts with nucleoporins NUP49, NUP57 and NUP100.

It is found in the cytoplasm. Its subcellular location is the nucleus. In terms of biological role, S-adenosyl-L-methionine-dependent protein-arginine N-methyltransferase that methylates the delta-nitrogen atom of arginine residues to form N5-methylarginine (type IV) in target proteins. Monomethylates ribosomal protein L12 (RPL12A/RPL12B) at 'Arg-67'. In Saccharomyces cerevisiae (strain ATCC 204508 / S288c) (Baker's yeast), this protein is Protein arginine N-methyltransferase 2.